We begin with the raw amino-acid sequence, 242 residues long: Protein HTATIP2 (242 aa).

Position 2 is an N-acetylalanine (alanine 2). Positions 2–25 are required for interaction with elongation factor EEF1A1; that stretch reads ADKETLLKLREDFKMQNKSVFILG. Positions 27, 28, 29, 30, 52, 53, 92, 93, 143, 147, 170, and 178 each coordinate NADPH. The active-site Proton acceptor is tyrosine 143. Lysine 147 is a catalytic residue.

Monomer. Forms homodimers during oxidative stress. Interacts (via N-terminus) with elongation factor EEF1A1 (via middle-region); the interaction is direct and competes with EEF1A1 binding to guanyl-nucleotide exchange factor EEF1B2, thereby inhibiting GDP for GTP exchange and reactivation of EEF1A1. Interacts with nuclear transport receptors XPO4, IPO5/RANBP5, IPO7, IPO9 and KPNB1 as well as GCN1L1/GCN1 and LRPPRC probably through their HEAT repeats. Binds NCOA5/CIA.

Functionally, represses translation by preventing reactivation of elongation factor eEF1A. May also inhibit nuclear import by competing with nuclear import substrates for binding to a subset of nuclear transport receptors. Has additionally been proposed to act as a redox sensor involved in cellular oxidative stress surveillance. May bind NADPH. The polypeptide is Protein HTATIP2 (Rattus norvegicus (Rat)).